Reading from the N-terminus, the 175-residue chain is Inosine/xanthosine triphosphatase (175 aa).

8 to 13 lines the substrate pocket; sequence TTNPAK. The Mg(2+) site is built by Asp-38 and Glu-68. Substrate is bound at residue 68 to 69; sequence EA.

This sequence belongs to the YjjX NTPase family. In terms of assembly, homodimer. Mg(2+) is required as a cofactor. Requires Mn(2+) as cofactor.

The catalysed reaction is XTP + H2O = XDP + phosphate + H(+). It catalyses the reaction ITP + H2O = IDP + phosphate + H(+). Phosphatase that hydrolyzes non-canonical purine nucleotides such as XTP and ITP to their respective diphosphate derivatives. Probably excludes non-canonical purines from DNA/RNA precursor pool, thus preventing their incorporation into DNA/RNA and avoiding chromosomal lesions. The polypeptide is Inosine/xanthosine triphosphatase (Yersinia enterocolitica serotype O:8 / biotype 1B (strain NCTC 13174 / 8081)).